We begin with the raw amino-acid sequence, 683 residues long: MSEEKAKSNTSRAIGIDLGTTFSCVAGYISGKVEVITNQDGERTTPSVVSFDENNCTVVGTAARNMVGSDPMSVIFDAKRMIGREFDDPKIQNAIKGWPFKVVRYNHREKREEPNKVSEGSNSYDNIAIKITRNGKTNYYAPVEISGKVLLYLKNAAEARLGGTVDSAVVTVPAYFEEPQKDVTKAAATIAGFDPNKVRLLAEPTAAAMAYGHIQTQKNANFSAKEDVLVFDLGGGTFDVSLLDFEFNGAAGSLGIVKAIDGDTFLGGQDFDNLLINYCISEFLKKNSSIKQSDLKESALLRLRAECTRVKAVLSSATSSAIYVPCFHMTDDLNVQITRARFELLCDHLFRRCMERTKGCLLRSAGVPEVEYSADGSKLLLNPSLEKTLNEVKNNISKVLLVGGSSRIPKIKALLAEYFGAHKVIEPVNADEAVAYGAAYQAASIYSDAVDAGSSLLLIDCVPLNLSIETAGGVATALIHCGDNIPIKKTETFTTYEDNQTAVTINVYEGNRAMCKDNKKIGSFNLDGIIAAPRGVPKIEVTFDVDHNGILIVTAQDKQTGKENQIKVTNSQNRLSQEEIERMTKEARDNEQRDNETKEKMGKRMAFDQAISSFKAFVEKANNISEEKKSESLRVIKENEEWLSNAQRPEDFEVEELERRSNDFQSFTSDIMKDVGMGGAPAA.

Belongs to the heat shock protein 70 family.

It is found in the cytoplasm. The sequence is that of Heat shock protein homolog ECU03_0520 from Encephalitozoon cuniculi (strain GB-M1) (Microsporidian parasite).